The chain runs to 141 residues: Hemoglobin subunit alpha-1 (141 aa).

A Globin domain is found at 1–141 (VLTDEDKARV…LSKDLVSKYR (141 aa)). Histidine 58 serves as a coordination point for O2. Residue histidine 87 participates in heme b binding.

It belongs to the globin family. In terms of assembly, heterotetramer of two alpha chains and two beta chains. As to expression, red blood cells.

Its function is as follows. Involved in oxygen transport from the lung to the various peripheral tissues. This chain is Hemoglobin subunit alpha-1, found in Naja naja (Indian cobra).